Here is a 510-residue protein sequence, read N- to C-terminus: 2,3-bisphosphoglycerate-independent phosphoglycerate mutase (510 aa).

Residues Asp-13 and Ser-63 each coordinate Mn(2+). The active-site Phosphoserine intermediate is the Ser-63. Residues His-124, 154-155, Arg-186, Arg-192, 262-265, and Lys-334 each bind substrate; these read RD and RADR. Mn(2+)-binding residues include Asp-401, His-405, Asp-442, His-443, and His-461.

It belongs to the BPG-independent phosphoglycerate mutase family. As to quaternary structure, monomer. It depends on Mn(2+) as a cofactor.

The enzyme catalyses (2R)-2-phosphoglycerate = (2R)-3-phosphoglycerate. The protein operates within carbohydrate degradation; glycolysis; pyruvate from D-glyceraldehyde 3-phosphate: step 3/5. Its function is as follows. Catalyzes the interconversion of 2-phosphoglycerate and 3-phosphoglycerate. The protein is 2,3-bisphosphoglycerate-independent phosphoglycerate mutase of Vibrio cholerae serotype O1 (strain ATCC 39541 / Classical Ogawa 395 / O395).